Here is a 560-residue protein sequence, read N- to C-terminus: Nucleoprotein (560 aa).

A binding site for the cap structure m7GTP region spans residues 53–236 (MRKDKRTDTD…ITQEQSQINV (184 aa)). The segment at 333–353 (LTDTGSPNHPPVRNGGSPRLS) is disordered. Mn(2+)-binding residues include Asp379 and Glu381. Positions 389, 496, 499, and 520 each coordinate Zn(2+). Position 524 (Asp524) interacts with Mn(2+).

The protein belongs to the arenaviridae nucleocapsid protein family. As to quaternary structure, homomultimerizes to form the nucleocapsid. Binds to viral genomic RNA. Interacts with glycoprotein G2. Interacts with protein Z; this interaction probably directs the encapsidated genome to budding sites. Interacts with protein L; this interaction does not interfere with Z-L interaction. Interacts with host IKBKE (via Protein kinase domain); the interaction inhibits IKBKE kinase activity.

Its subcellular location is the virion. It localises to the host cytoplasm. Its function is as follows. Encapsidates the genome, protecting it from nucleases. The encapsidated genomic RNA is termed the nucleocapsid (NC). Serves as template for viral transcription and replication. The increased presence of protein N in host cell does not seem to trigger the switch from transcription to replication as observed in other negative strain RNA viruses. Through the interaction with host IKBKE, strongly inhibits the phosphorylation and nuclear translocation of host IRF3, a protein involved in interferon activation pathway, leading to the inhibition of interferon-beta and IRF3-dependent promoters activation. Also encodes a functional 3'-5' exoribonuclease that degrades preferentially dsRNA substrates and thereby participates in the suppression of interferon induction. The chain is Nucleoprotein from Pirital mammarenavirus (isolate Rat/Venezuela/VAV-488/1995) (PIRV).